We begin with the raw amino-acid sequence, 409 residues long: MQQPNKLTPFFENLNFERDDNTMVINFGPQHPSAHGQLRLVLELEGEQVVKAYPDIGYLHRGIEKMAENMTYNEFLPTTDRLDYIASTANNYAYALAVEKLLGIEAPRRAQVIRTMLLEINRLISHLFFIATHALDVGAMSVFLYAFREREFGMDLMEDYCGARLTHSAVRIGGVPLDLPNGWIEKMISWCDKVDHELEHTYNALLQENRIWKMRLEDVGVISAEDALSWGCTGPMLRGSGVNWDIRKEEPYELYGELDFDIPVSDRCDSYGRYRLYMEEMHQSTRILRQLVSKYKESEPQLMAHAPQYISAPKEEIMTQNYALMQHFVLVTQGMRPPKGEVYVPTESPKGELGFYIKSEGEPYAYRLKCRAPSFFHTGLLQEILVGTYIADVVTIIGSTNIVFGEVDR.

The protein belongs to the complex I 49 kDa subunit family. In terms of assembly, NDH-1 is composed of 14 different subunits. Subunits NuoB, C, D, E, F, and G constitute the peripheral sector of the complex.

The protein localises to the cell inner membrane. The catalysed reaction is a quinone + NADH + 5 H(+)(in) = a quinol + NAD(+) + 4 H(+)(out). NDH-1 shuttles electrons from NADH, via FMN and iron-sulfur (Fe-S) centers, to quinones in the respiratory chain. The immediate electron acceptor for the enzyme in this species is believed to be ubiquinone. Couples the redox reaction to proton translocation (for every two electrons transferred, four hydrogen ions are translocated across the cytoplasmic membrane), and thus conserves the redox energy in a proton gradient. In Sulfurovum sp. (strain NBC37-1), this protein is NADH-quinone oxidoreductase subunit D.